Consider the following 385-residue polypeptide: tRNA (guanine(26)-N(2))-dimethyltransferase (385 aa).

A Trm1 methyltransferase domain is found at 1–379 (MNITEGVVEL…ATIAEIRSAT (379 aa)). The S-adenosyl-L-methionine site is built by arginine 37, arginine 67, aspartate 82, aspartate 108, and alanine 109. Zn(2+)-binding residues include cysteine 247, cysteine 250, cysteine 267, and cysteine 270.

It belongs to the class I-like SAM-binding methyltransferase superfamily. Trm1 family.

It carries out the reaction guanosine(26) in tRNA + 2 S-adenosyl-L-methionine = N(2)-dimethylguanosine(26) in tRNA + 2 S-adenosyl-L-homocysteine + 2 H(+). Dimethylates a single guanine residue at position 26 of a number of tRNAs using S-adenosyl-L-methionine as donor of the methyl groups. The chain is tRNA (guanine(26)-N(2))-dimethyltransferase from Haloquadratum walsbyi (strain DSM 16790 / HBSQ001).